The following is a 498-amino-acid chain: MRINPTTSXPGVSTLEEKTLGRITQIIGPVLDVAFPPGKMPNINNSLXVKGRDTVGQQINVTCXVQQLLGNNRVRAVAMSATDGLMRGMEVIDTGAPLSVPVGGSTLGRIFNVLGEPVDNLGPVDTRTTSPIHRSAPAFIQLDTKLSIFETGIKVVDLLAPYRRGGKIGLFGGAGVGKTVLIMELINNIAKAHGGVSVFGGVGERTREGNDLYMEMKESGVINEQNIAESKVALVYGQMNEPPGARMRVGLTALTMAEYFRDVNEQDVLLFIDNISRFVQAGSEVSALLGRMPSAVGYQPTLSTEMGSLQERITSTKEGSITSIQAVYVPADDLTDPAPATTFAHLDATTVLSRGLAAKGIYPAVDPLDSTSTMLQPRIVGEEHYETAQRVKQTSQRYKELQDIIAILGLDELSEEDRLTVARARKIERFLSQPFFVAEVFTGSPGKYVGLAETIRGFQLILSGELDGLPEQAFYLVGNIDEATAKAMNLEVESKLKK.

An ATP-binding site is contributed by 172 to 179 (GGAGVGKT).

It belongs to the ATPase alpha/beta chains family. F-type ATPases have 2 components, CF(1) - the catalytic core - and CF(0) - the membrane proton channel. CF(1) has five subunits: alpha(3), beta(3), gamma(1), delta(1), epsilon(1). CF(0) has four main subunits: a(1), b(1), b'(1) and c(9-12).

It is found in the plastid. The protein localises to the chloroplast thylakoid membrane. The enzyme catalyses ATP + H2O + 4 H(+)(in) = ADP + phosphate + 5 H(+)(out). In terms of biological role, produces ATP from ADP in the presence of a proton gradient across the membrane. The catalytic sites are hosted primarily by the beta subunits. The sequence is that of ATP synthase subunit beta, chloroplastic from Schisandra sphenanthera (Southern magnolia vine).